A 95-amino-acid chain; its full sequence is Integration host factor subunit beta (95 aa).

This sequence belongs to the bacterial histone-like protein family. In terms of assembly, heterodimer of an alpha and a beta chain.

Functionally, this protein is one of the two subunits of integration host factor, a specific DNA-binding protein that functions in genetic recombination as well as in transcriptional and translational control. The polypeptide is Integration host factor subunit beta (Klebsiella pneumoniae subsp. pneumoniae (strain ATCC 700721 / MGH 78578)).